We begin with the raw amino-acid sequence, 158 residues long: MQGRLSAWLAKHRLVHRSLGFDYQGIETLQIKPEDWHSIAVILYVYGYNYLRSQCAYDVAPGGLLASVYHLTRIQYGVDQPEEVCIKVFAPRRNPRIPSVFWIWKSADFQERESYDMLGISYDNHPRLKRILMPESWIGWPLRKDYIAPNFYEIQDAH.

It belongs to the complex I 30 kDa subunit family. As to quaternary structure, NDH is composed of at least 16 different subunits, 5 of which are encoded in the nucleus.

The protein localises to the plastid. It is found in the chloroplast thylakoid membrane. It carries out the reaction a plastoquinone + NADH + (n+1) H(+)(in) = a plastoquinol + NAD(+) + n H(+)(out). It catalyses the reaction a plastoquinone + NADPH + (n+1) H(+)(in) = a plastoquinol + NADP(+) + n H(+)(out). Its function is as follows. NDH shuttles electrons from NAD(P)H:plastoquinone, via FMN and iron-sulfur (Fe-S) centers, to quinones in the photosynthetic chain and possibly in a chloroplast respiratory chain. The immediate electron acceptor for the enzyme in this species is believed to be plastoquinone. Couples the redox reaction to proton translocation, and thus conserves the redox energy in a proton gradient. This chain is NAD(P)H-quinone oxidoreductase subunit J, chloroplastic, found in Ranunculus macranthus (Large buttercup).